The chain runs to 139 residues: Endoribonuclease YbeY (139 aa).

Residues His-105, His-109, and Asp-115 each contribute to the Zn(2+) site.

It belongs to the endoribonuclease YbeY family. Zn(2+) serves as cofactor.

It is found in the cytoplasm. Its function is as follows. Single strand-specific metallo-endoribonuclease involved in late-stage 70S ribosome quality control and in maturation of the 3' terminus of the 16S rRNA. The protein is Endoribonuclease YbeY of Flavobacterium johnsoniae (strain ATCC 17061 / DSM 2064 / JCM 8514 / BCRC 14874 / CCUG 350202 / NBRC 14942 / NCIMB 11054 / UW101) (Cytophaga johnsonae).